The primary structure comprises 249 residues: MANDPIHQFQVSRWIPIDVGGVDLSFTNVSAFMVATVVLASGFLYLTSSGRGLIPTRLQSVSEMAYEFVATSLRDSAGSKGMKFFPFVFSLFMFVLVANFIGLFPYFYTVTSQIIVTFALSLLVIGTVIFYGFFKHGFGFLKLFVPSGVPGIIVPLVVLIEIISFLSRPISLSVRLFANMLAGHITLKVFAGFVVSLSSLGALGIGGAVLPLLMTVAITALEFLVAFLQAYVFTVLTCMYINDAVHPGH.

6 helical membrane-spanning segments follow: residues 26-46 (FTNVSAFMVATVVLASGFLYL), 84-104 (FFPFVFSLFMFVLVANFIGLF), 114-134 (IIVTFALSLLVIGTVIFYGFF), 143-163 (LFVPSGVPGIIVPLVVLIEII), 185-205 (ITLKVFAGFVVSLSSLGALGI), and 208-228 (AVLPLLMTVAITALEFLVAFL).

The protein belongs to the ATPase A chain family. As to quaternary structure, F-type ATPases have 2 components, CF(1) - the catalytic core - and CF(0) - the membrane proton channel. CF(1) has five subunits: alpha(3), beta(3), gamma(1), delta(1), epsilon(1). CF(0) has three main subunits: a(1), b(2) and c(9-12). The alpha and beta chains form an alternating ring which encloses part of the gamma chain. CF(1) is attached to CF(0) by a central stalk formed by the gamma and epsilon chains, while a peripheral stalk is formed by the delta and b chains.

It is found in the cell inner membrane. In terms of biological role, key component of the proton channel; it plays a direct role in the translocation of protons across the membrane. In Brucella canis (strain ATCC 23365 / NCTC 10854 / RM-666), this protein is ATP synthase subunit a.